The sequence spans 507 residues: Histidine ammonia-lyase (507 aa).

A cross-link (5-imidazolinone (Ala-Gly)) is located at residues 141-143 (ASG). A 2,3-didehydroalanine (Ser) modification is found at S142.

The protein belongs to the PAL/histidase family. Post-translationally, contains an active site 4-methylidene-imidazol-5-one (MIO), which is formed autocatalytically by cyclization and dehydration of residues Ala-Ser-Gly.

The protein localises to the cytoplasm. It carries out the reaction L-histidine = trans-urocanate + NH4(+). It participates in amino-acid degradation; L-histidine degradation into L-glutamate; N-formimidoyl-L-glutamate from L-histidine: step 1/3. This Burkholderia vietnamiensis (strain G4 / LMG 22486) (Burkholderia cepacia (strain R1808)) protein is Histidine ammonia-lyase.